The chain runs to 385 residues: Isocitrate dehydrogenase [NAD] subunit beta, mitochondrial (385 aa).

The transit peptide at 1–33 (MAALSRVRWLTRALVAAPNPGAWRSLCTSTVAQ) directs the protein to the mitochondrion. Residue Lys199 is modified to N6-acetyllysine.

The protein belongs to the isocitrate and isopropylmalate dehydrogenases family. In terms of assembly, heterooligomer of subunits alpha (IDH3A), beta (IDH3B), and gamma (IDH3G) in the apparent ratio of 2:1:1. The heterodimer containing one IDH3A and one IDH3B subunit and the heterodimer containing one IDH3A and one IDH3G subunit assemble into a heterotetramer (which contains two subunits of IDH3A, one of IDH3B and one of IDH3G) and further into the heterooctamer. Isoform A is predominant in heart muscle; also found in brain, kidney and liver. Isoform B is present in kidney and liver.

Its subcellular location is the mitochondrion. Its activity is regulated as follows. The heterotetramer and the heterodimer composed of IDH3A and IDH3G subunits can be allosterically activated by citrate (CIT) or/and ADP, and the two activators can act independently or synergistically. The heterodimer composed of IDH3A and IDH3B subunits cannot be allosterically regulated and the allosteric regulation of the heterotetramer is through the IDH3G subunit and not the IDH3B subunit. The IDH3G subunit contains the allosteric site which consists of a CIT-binding site and an ADP-binding site, and the binding of CIT and ADP causes conformational changes at the allosteric site which are transmitted to the active site in the catalytic subunit (IDH3A) through a cascade of conformational changes at the heterodimer interface, leading to stabilization of the isocitrate-binding at the active site and thus activation of the enzyme. ATP can activate the heterotetramer and the heterodimer composed of IDH3A and IDH3G subunits at low concentrations but inhibits their activities at high concentrations, whereas ATP exhibits only inhibitory effect on the heterodimer composed of IDH3A and IDH3B subunits. In terms of biological role, plays a structural role to facilitate the assembly and ensure the full activity of the enzyme catalyzing the decarboxylation of isocitrate (ICT) into alpha-ketoglutarate. The heterodimer composed of the alpha (IDH3A) and beta (IDH3B) subunits and the heterodimer composed of the alpha (IDH3A) and gamma (IDH3G) subunits, have considerable basal activity but the full activity of the heterotetramer (containing two subunits of IDH3A, one of IDH3B and one of IDH3G) requires the assembly and cooperative function of both heterodimers. This chain is Isocitrate dehydrogenase [NAD] subunit beta, mitochondrial (IDH3B), found in Bos taurus (Bovine).